A 249-amino-acid chain; its full sequence is Ditrans,polycis-undecaprenyl-diphosphate synthase ((2E,6E)-farnesyl-diphosphate specific) (249 aa).

Residue Asp26 is part of the active site. Residue Asp26 participates in Mg(2+) binding. Residues 27-30, Trp31, Arg39, His43, and 71-73 each bind substrate; these read GNGR and SRE. The active-site Proton acceptor is Asn74. Residues Trp75, Arg77, Arg194, and 200-202 contribute to the substrate site; that span reads RIS. Glu213 is a binding site for Mg(2+).

The protein belongs to the UPP synthase family. In terms of assembly, homodimer. Requires Mg(2+) as cofactor.

The enzyme catalyses 8 isopentenyl diphosphate + (2E,6E)-farnesyl diphosphate = di-trans,octa-cis-undecaprenyl diphosphate + 8 diphosphate. Its function is as follows. Catalyzes the sequential condensation of isopentenyl diphosphate (IPP) with (2E,6E)-farnesyl diphosphate (E,E-FPP) to yield (2Z,6Z,10Z,14Z,18Z,22Z,26Z,30Z,34E,38E)-undecaprenyl diphosphate (di-trans,octa-cis-UPP). UPP is the precursor of glycosyl carrier lipid in the biosynthesis of bacterial cell wall polysaccharide components such as peptidoglycan and lipopolysaccharide. The polypeptide is Ditrans,polycis-undecaprenyl-diphosphate synthase ((2E,6E)-farnesyl-diphosphate specific) (Buchnera aphidicola subsp. Schizaphis graminum (strain Sg)).